We begin with the raw amino-acid sequence, 591 residues long: Metalloendopeptidase OPG085 (591 aa).

Residue H41 participates in Zn(2+) binding. The active site involves E44. H45 contacts Zn(2+).

The protein belongs to the peptidase M44 family. The cofactor is Zn(2+). Undergoes proteolytic processing during the course of infection. May be cleaved into 46 kDa and 22 kDa products (Potential).

The protein resides in the virion. Its function is as follows. Probably involved in maturation of some viral proteins by processing them preferentially at Ala-Gly-|-Ser/Thr/Lys motifs. Does not seem to be responsible for the cleavage of major core proteins. This is Metalloendopeptidase OPG085 (OPG085) from Homo sapiens (Human).